Here is a 790-residue protein sequence, read N- to C-terminus: MNHWLAFLNKPESLKEQNSDCDQQGEMRHVTDGTLTKSPESKPFRERRSQTWIDSEVPTSTEKSNVQESISSDIISKLSNRRSRRNRSESWAGSEASSPSGNISTLENATEKNTLKSPNKFLQRGGLPTVGIGSQALSPAGKPSTLGNVSPGKFTTYKVHNSIEVNRFSSTPTKLLTNPHKVAAISNDEHYVVSNESLEENIEVAHLENVFRSSKTPDEEQSEYMKLGEIRLSSSSYGGSISKENSLPKVLDELQSQNEEIKALRQKLEEKDDRIQELEELNSMNDAKLQRIEDLQKEFHNERKAASKRLNIVQDRFRKEIKKIREEKITDFQNKNASKKEKNEVTSAKTKCKAFSQRNILVSELYRKQKQILNLQQENDKFLKDINESNNSIVKLRSEVEILKSNLQLSQDENKKLHDNGSFYEKRLNDVYSYMQNLSLFEKDLGKFILEEMKCGHSPSMFQNGFAKLYPDFQDIKNLENMEQYKQLKGKIELLEKNDRIRLEKIISVFKLINERLHFMQQQHSHKIKYLQKEALTKEQQFRLEKRRWHDILNLKEENFQKLKSELKEKLILSEKIQKNAEDKLNDYMNEHQEIVEKLQNQALIASRWSTQIQESENTHKKITDELAGKQSEILKLEETILSLKEDVFQEKLNLKKLYGDPSTELNFETVGKSFPHITKEKYDSLGLDILTDLTYVQSQNLIKNLLIVLDIPLKTFLKIVPTIVIQLRCELTLLTKFANDLNLKVFGKQLDFKSRRKVAMNEFLNNHDIAEVKHPLEYDLQALFKYFFS.

Residues 8 to 122 (LNKPESLKEQ…NTLKSPNKFL (115 aa)) are disordered. Residues 39 to 49 (PESKPFRERRS) show a composition bias toward basic and acidic residues. Polar residues-rich tracts occupy residues 50–78 (QTWI…ISKL) and 89–108 (ESWA…TLEN). 4 coiled-coil regions span residues 241 to 328 (ISKE…REEK), 361 to 430 (LVSE…RLND), 477 to 498 (KNLE…LEKN), and 540 to 658 (QQFR…LKKL).

As to quaternary structure, interacts directly with SSP1. Probable component of a SPB complex composed of ADY3, SSP1, DON1, MPC54, SPO21/MPC70, NUD1 and CNM67. Phosphorylated.

Its subcellular location is the prospore membrane. The protein resides in the cytoplasm. The protein localises to the cytoskeleton. It localises to the microtubule organizing center. It is found in the spindle pole body. Involved in the pathway that organizes the prospore membrane (PSM) during sporulation. Mediates the assembly of the DON1 ring structure at the leading edge of PSM during meiosis II. May constitute a physical link between SSP1-containing PSM precursors and the spindle pole body (SPB) and may facilitate the recruitment of other factors that are required to promote spore wall formation. This Saccharomyces cerevisiae (strain ATCC 204508 / S288c) (Baker's yeast) protein is Accumulates dyads protein 3 (ADY3).